The chain runs to 353 residues: MKKTAIALVVAGLAAASVAQAAPQENTFYAGVKAGQASFHDGLRALAREYKVGYHRNSFTYGVFGGYQILNQNNLGLAVELGYDDFGRAKGREKGKTVVKHTNHGTHLSLKGSYEVLEGLDVYGKAGVALVRSDYKLYNENSSTLKKLGEHHRARASGLFAVGAEYAVLPELAVRLEYQWLTRVGKYRPQDKPNTALNYNPWIGSINAGISYRFGQGAAPVVAAPEVVSKTFSLNSDVTFAFGKANLKPQAQATLDSIYGEMSQVKSAKVAVAGYTDRIGSDAFNVKLSQERADSVANYFVAKGVAADAISATGYGKANPVTGATCDQVKGRKALIACFAPDRRVEIAVNGTK.

A signal peptide spans 1–21 (MKKTAIALVVAGLAAASVAQA). A run of 8 beta stranded transmembrane segments spans residues 27-37 (TFYAGVKAGQA), 58-69 (SFTYGVFGGYQI), 77-85 (LAVELGYDD), 104-115 (HGTHLSLKGSYE), 120-128 (LDVYGKAGV), 158-167 (GLFAVGAEYA), 172-179 (LAVRLEYQ), and 205-213 (SINAGISYR). The region spanning 227–353 (VVSKTFSLNS…RVEIAVNGTK (127 aa)) is the OmpA-like domain. An intrachain disulfide couples cysteine 326 to cysteine 338.

This sequence belongs to the outer membrane OOP (TC 1.B.6) superfamily. OmpA family. As to quaternary structure, monomer and homodimer.

The protein resides in the cell outer membrane. Its function is as follows. With TolR probably plays a role in maintaining the position of the peptidoglycan cell wall in the periplasm. Acts as a porin with low permeability that allows slow penetration of small solutes; an internal gate slows down solute passage. In terms of biological role, reconstitution in planar bilayers with lithium dodecyl sulfate-solublized P5 yields narrow pores (58 pS conductance) with a low probability of opening, whereas n-octyl-bD-glucopyranoside-solubilized P5 forms large pores (1.1 nS conductance) with high open probability. The large pore easily converts to the smaller pore at room temperature; at 42 degrees Celsius the smaller pore converts to the larger one. In Haemophilus influenzae (strain ATCC 51907 / DSM 11121 / KW20 / Rd), this protein is Outer membrane protein P5.